Here is a 570-residue protein sequence, read N- to C-terminus: Formate--tetrahydrofolate ligase (570 aa).

65 to 72 (TPFGEGKT) is a binding site for ATP.

It belongs to the formate--tetrahydrofolate ligase family.

The catalysed reaction is (6S)-5,6,7,8-tetrahydrofolate + formate + ATP = (6R)-10-formyltetrahydrofolate + ADP + phosphate. The protein operates within one-carbon metabolism; tetrahydrofolate interconversion. This chain is Formate--tetrahydrofolate ligase, found in Shewanella woodyi (strain ATCC 51908 / MS32).